The following is a 313-amino-acid chain: Porphobilinogen deaminase (313 aa).

Cysteine 242 is subject to S-(dipyrrolylmethanemethyl)cysteine.

The protein belongs to the HMBS family. Monomer. Dipyrromethane serves as cofactor.

The catalysed reaction is 4 porphobilinogen + H2O = hydroxymethylbilane + 4 NH4(+). Its pathway is porphyrin-containing compound metabolism; protoporphyrin-IX biosynthesis; coproporphyrinogen-III from 5-aminolevulinate: step 2/4. Tetrapolymerization of the monopyrrole PBG into the hydroxymethylbilane pre-uroporphyrinogen in several discrete steps. The chain is Porphobilinogen deaminase from Escherichia coli O6:H1 (strain CFT073 / ATCC 700928 / UPEC).